Reading from the N-terminus, the 196-residue chain is Probable malonic semialdehyde reductase RutE (196 aa).

The protein belongs to the nitroreductase family. HadB/RutE subfamily. The cofactor is FMN.

It catalyses the reaction 3-hydroxypropanoate + NADP(+) = 3-oxopropanoate + NADPH + H(+). Functionally, may reduce toxic product malonic semialdehyde to 3-hydroxypropionic acid, which is excreted. In Enterobacter sp. (strain 638), this protein is Probable malonic semialdehyde reductase RutE.